Consider the following 866-residue polypeptide: FHIP family protein v1g243165 (866 aa).

2 disordered regions span residues 739–761 (RDGP…ASTS) and 781–814 (GSTA…ESQT). Residues 751-761 (SIGSIGSASTS) show a composition bias toward low complexity.

It belongs to the FHIP family.

In Nematostella vectensis (Starlet sea anemone), this protein is FHIP family protein v1g243165.